Reading from the N-terminus, the 206-residue chain is dTTP/UTP pyrophosphatase (206 aa).

D79 acts as the Proton acceptor in catalysis.

This sequence belongs to the Maf family. YhdE subfamily. A divalent metal cation serves as cofactor.

The protein resides in the cytoplasm. The enzyme catalyses dTTP + H2O = dTMP + diphosphate + H(+). It carries out the reaction UTP + H2O = UMP + diphosphate + H(+). Its function is as follows. Nucleoside triphosphate pyrophosphatase that hydrolyzes dTTP and UTP. May have a dual role in cell division arrest and in preventing the incorporation of modified nucleotides into cellular nucleic acids. The polypeptide is dTTP/UTP pyrophosphatase (Rhizobium johnstonii (strain DSM 114642 / LMG 32736 / 3841) (Rhizobium leguminosarum bv. viciae)).